The following is a 337-amino-acid chain: Holliday junction branch migration complex subunit RuvB (337 aa).

The segment at 1–180 (MTRLISADKS…FGVISRLEFY (180 aa)) is large ATPase domain (RuvB-L). ATP contacts are provided by residues Leu19, Arg20, Gly61, Lys64, Thr65, Thr66, 127–129 (EDF), Arg170, Tyr180, and Arg217. Residue Thr65 participates in Mg(2+) binding. The interval 181–251 (THEELAFIIT…VADQALALLE (71 aa)) is small ATPAse domain (RuvB-S). A head domain (RuvB-H) region spans residues 254–337 (DMGFDMMDRA…APEPPQGKLF (84 aa)). Arg309 and Arg314 together coordinate DNA.

Belongs to the RuvB family. Homohexamer. Forms an RuvA(8)-RuvB(12)-Holliday junction (HJ) complex. HJ DNA is sandwiched between 2 RuvA tetramers; dsDNA enters through RuvA and exits via RuvB. An RuvB hexamer assembles on each DNA strand where it exits the tetramer. Each RuvB hexamer is contacted by two RuvA subunits (via domain III) on 2 adjacent RuvB subunits; this complex drives branch migration. In the full resolvosome a probable DNA-RuvA(4)-RuvB(12)-RuvC(2) complex forms which resolves the HJ.

The protein resides in the cytoplasm. It catalyses the reaction ATP + H2O = ADP + phosphate + H(+). In terms of biological role, the RuvA-RuvB-RuvC complex processes Holliday junction (HJ) DNA during genetic recombination and DNA repair, while the RuvA-RuvB complex plays an important role in the rescue of blocked DNA replication forks via replication fork reversal (RFR). RuvA specifically binds to HJ cruciform DNA, conferring on it an open structure. The RuvB hexamer acts as an ATP-dependent pump, pulling dsDNA into and through the RuvAB complex. RuvB forms 2 homohexamers on either side of HJ DNA bound by 1 or 2 RuvA tetramers; 4 subunits per hexamer contact DNA at a time. Coordinated motions by a converter formed by DNA-disengaged RuvB subunits stimulates ATP hydrolysis and nucleotide exchange. Immobilization of the converter enables RuvB to convert the ATP-contained energy into a lever motion, pulling 2 nucleotides of DNA out of the RuvA tetramer per ATP hydrolyzed, thus driving DNA branch migration. The RuvB motors rotate together with the DNA substrate, which together with the progressing nucleotide cycle form the mechanistic basis for DNA recombination by continuous HJ branch migration. Branch migration allows RuvC to scan DNA until it finds its consensus sequence, where it cleaves and resolves cruciform DNA. The polypeptide is Holliday junction branch migration complex subunit RuvB (Citrifermentans bemidjiense (strain ATCC BAA-1014 / DSM 16622 / JCM 12645 / Bem) (Geobacter bemidjiensis)).